The primary structure comprises 523 residues: Cytoplasmic dynein 1 light intermediate chain 1 (523 aa).

Residues 1–45 are disordered; it reads MAAVGRVGSFGSSPPGLASTYASGPLANELASGSGGPAAGDDEDG. An ATP-binding site is contributed by 74 to 81; that stretch reads GEDGAGKT. Phosphoserine is present on Ser-207. Position 213 is a phosphothreonine (Thr-213). Disordered stretches follow at residues 387-434 and 457-523; these read PPTA…DPNM and GSPG…GEAS. Phosphoserine is present on residues Ser-398 and Ser-405. Thr-408 is modified (phosphothreonine). Phosphoserine is present on residues Ser-412, Ser-419, Ser-421, and Ser-427. Residues 412-421 are compositionally biased toward low complexity; that stretch reads SVSSNVASVS. Gly residues predominate over residues 458–473; that stretch reads SPGGPGVGGSPGGGAA. Positions 474–483 are enriched in low complexity; sequence GASTSLPPSA. Phosphoserine is present on residues Ser-486 and Ser-510. Phosphothreonine is present on residues Thr-512 and Thr-513. Ser-516 is modified (phosphoserine).

The protein belongs to the dynein light intermediate chain family. As to quaternary structure, homodimer. The cytoplasmic dynein 1 complex consists of two catalytic heavy chains (HCs) and a number of non-catalytic subunits presented by intermediate chains (ICs), light intermediate chains (LICs) and light chains (LCs); the composition seems to vary in respect to the IC, LIC and LC composition. The heavy chain homodimer serves as a scaffold for the probable homodimeric assembly of the respective non-catalytic subunits. The ICs and LICs bind directly to the HC dimer and the LCs assemble on the IC dimer. Self-associates. Interacts with DYNC1H1; DYNC1LI1 and DYNC1LI2 bind mutually exclusive to DYNC1H1. Interacts with PCNT. Forms a complex with RAB11FIP3 and RAB11A1; the interaction between DYNC1LI1 and RAB11FIP3 is direct and induces DYNC1LI1 localization onto endosomal membrane; the complex regulates endocytic trafficking. Interacts with RUFY3. Post-translationally, phosphorylated during mitosis but not in interphase.

Its subcellular location is the cytoplasm. The protein localises to the chromosome. It localises to the centromere. The protein resides in the kinetochore. It is found in the cytoskeleton. Its subcellular location is the spindle pole. The protein localises to the recycling endosome membrane. In terms of biological role, acts as one of several non-catalytic accessory components of the cytoplasmic dynein 1 complex that are thought to be involved in linking dynein to cargos and to adapter proteins that regulate dynein function. Cytoplasmic dynein 1 acts as a motor for the intracellular retrograde motility of vesicles and organelles along microtubules. May play a role in binding dynein to membranous organelles or chromosomes. Probably involved in the microtubule-dependent transport of pericentrin. Is required for progress through the spindle assembly checkpoint. The phosphorylated form appears to be involved in the selective removal of MAD1L1 and MAD1L2 but not BUB1B from kinetochores. Forms a functional Rab11/RAB11FIP3/dynein complex onto endosomal membrane that regulates the movement of peripheral sorting endosomes (SE) along microtubule tracks toward the microtubule organizing center/centrosome, generating the endosomal recycling compartment (ERC). This Rattus norvegicus (Rat) protein is Cytoplasmic dynein 1 light intermediate chain 1 (Dync1li1).